The primary structure comprises 78 residues: Exodeoxyribonuclease 7 small subunit (78 aa).

This sequence belongs to the XseB family. Heterooligomer composed of large and small subunits.

The protein localises to the cytoplasm. The catalysed reaction is Exonucleolytic cleavage in either 5'- to 3'- or 3'- to 5'-direction to yield nucleoside 5'-phosphates.. In terms of biological role, bidirectionally degrades single-stranded DNA into large acid-insoluble oligonucleotides, which are then degraded further into small acid-soluble oligonucleotides. In Psychromonas ingrahamii (strain DSM 17664 / CCUG 51855 / 37), this protein is Exodeoxyribonuclease 7 small subunit.